Consider the following 299-residue polypeptide: UTP--glucose-1-phosphate uridylyltransferase 1 (299 aa).

This sequence belongs to the UDPGP type 2 family.

It catalyses the reaction alpha-D-glucose 1-phosphate + UTP + H(+) = UDP-alpha-D-glucose + diphosphate. The protein operates within carbohydrate metabolism; nucleotide-sugar metabolism. This chain is UTP--glucose-1-phosphate uridylyltransferase 1 (hasC1), found in Streptococcus pyogenes serotype M6 (strain ATCC BAA-946 / MGAS10394).